The primary structure comprises 247 residues: Segregation and condensation protein A (247 aa).

Belongs to the ScpA family. As to quaternary structure, component of a cohesin-like complex composed of ScpA, ScpB and the Smc homodimer, in which ScpA and ScpB bind to the head domain of Smc. The presence of the three proteins is required for the association of the complex with DNA.

The protein resides in the cytoplasm. Its function is as follows. Participates in chromosomal partition during cell division. May act via the formation of a condensin-like complex containing Smc and ScpB that pull DNA away from mid-cell into both cell halves. This Caldanaerobacter subterraneus subsp. tengcongensis (strain DSM 15242 / JCM 11007 / NBRC 100824 / MB4) (Thermoanaerobacter tengcongensis) protein is Segregation and condensation protein A.